The primary structure comprises 544 residues: Methionine--tRNA ligase (544 aa).

A 'HIGH' region motif is present at residues 10 to 20 (PYANGSLHLGH). Zn(2+)-binding residues include Cys-141, Cys-144, Cys-153, and Cys-156. The 'KMSKS' region signature appears at 329–333 (KLSTS). Thr-332 is an ATP binding site.

Belongs to the class-I aminoacyl-tRNA synthetase family. MetG type 1 subfamily. Monomer. Zn(2+) serves as cofactor.

Its subcellular location is the cytoplasm. It catalyses the reaction tRNA(Met) + L-methionine + ATP = L-methionyl-tRNA(Met) + AMP + diphosphate. Its function is as follows. Is required not only for elongation of protein synthesis but also for the initiation of all mRNA translation through initiator tRNA(fMet) aminoacylation. The polypeptide is Methionine--tRNA ligase (Bacillus mycoides (strain KBAB4) (Bacillus weihenstephanensis)).